We begin with the raw amino-acid sequence, 334 residues long: MLVAMTTASYVTILVTLLFHILTINAKTVTKRAKETNLEDDEPQYWRGRFAKDVVPQFWKGRFSDPQFWKGRFSDPQFWKGRFSSHGNKRRYVPGRYGREFQGRFGREFQGRFGREQGRFGREEDQGRFGREEDQGRFGREEQGRFGREEDQGRFGREEDQGRFGREEDQGRFGREEEQGRFGREEDQGRFGREEEQGRFGREEDQGRFGREEDQGRFGREEEQGRFGKRDEDQGRFGKREDQGRFGKRDEDQGRFGKRDEDQGRFGKREDQGRFGKREDQGRFGRELLAKLNKRTTSIQEDPQTRFRDVQMTRRNVAKKDKIEESNDEEANKS.

The N-terminal stretch at 1-26 (MLVAMTTASYVTILVTLLFHILTINA) is a signal peptide. The propeptide occupies 27 to 116 (KTVTKRAKET…REFQGRFGRE (90 aa)). Basic and acidic residues-rich tracts occupy residues 115–289 (REQG…RELL) and 303–334 (PQTR…ANKS). The segment at 115–334 (REQGRFGREE…ESNDEEANKS (220 aa)) is disordered. F120 bears the Phenylalanine amide mark. Residues 122-125 (REED) constitute a propeptide that is removed on maturation. A Phenylalanine amide modification is found at F129. Residues 131 to 134 (REED) constitute a propeptide that is removed on maturation. F138 is subject to Phenylalanine amide. Positions 140-142 (REE) are excised as a propeptide. F146 is modified (phenylalanine amide). A propeptide spanning residues 148 to 151 (REED) is cleaved from the precursor. Phenylalanine amide is present on F155. A propeptide spanning residues 157–160 (REED) is cleaved from the precursor. F164 carries the phenylalanine amide modification. The propeptide occupies 166–169 (REED). Phenylalanine amide is present on F173. The propeptide occupies 175-178 (REEE). Phenylalanine amide is present on F182. Residues 184-187 (REED) constitute a propeptide that is removed on maturation. A Phenylalanine amide modification is found at F191. Positions 193-196 (REEE) are excised as a propeptide. Position 200 is a phenylalanine amide (F200). The propeptide occupies 202-205 (REED). The residue at position 209 (F209) is a Phenylalanine amide. The propeptide occupies 211 to 214 (REED). The residue at position 218 (F218) is a Phenylalanine amide. The propeptide occupies 220–223 (REEE). F227 carries the phenylalanine amide modification. The propeptide occupies 229-233 (KRDED). Position 237 is a phenylalanine amide (F237). A propeptide spanning residues 239 to 242 (KRED) is cleaved from the precursor. Phenylalanine amide is present on F246. The propeptide occupies 248 to 252 (KRDED). Position 256 is a phenylalanine amide (F256). Residues 258–262 (KRDED) constitute a propeptide that is removed on maturation. F266 is subject to Phenylalanine amide. Residues 268–271 (KRED) constitute a propeptide that is removed on maturation. The residue at position 275 (F275) is a Phenylalanine amide. Positions 277-280 (KRED) are excised as a propeptide. The residue at position 284 (F284) is a Phenylalanine amide. Residues 286–334 (RELLAKLNKRTTSIQEDPQTRFRDVQMTRRNVAKKDKIEESNDEEANKS) constitute a propeptide that is removed on maturation.

Belongs to the FARP (FMRFamide related peptide) family. In terms of tissue distribution, neurons associated with smooth muscle fibers.

The protein resides in the secreted. Not known but it could act as a transmitter at neuromuscular synapses. The protein is Antho-RFamide neuropeptides of Calliactis parasitica (Sea anemone).